Consider the following 1716-residue polypeptide: Histone-lysine N-methyltransferase SETD1A (1716 aa).

Residues 60 to 89 form an interaction with WDR82 region; that stretch reads LQDPRCHVRSKARDFSLPVPKFKLDEFYIG. Residues 84–172 enclose the RRM domain; sequence DEFYIGQIPL…NIIHAQLDIK (89 aa). Disordered regions lie at residues 194–367, 380–499, 516–670, 849–869, 911–1206, 1230–1259, and 1275–1297; these read PTGG…SSYP, TSYP…AQHS, FSFL…PPPH, AKPFQNAAKQQAKEEDKEKMK, KRKE…SRKV, EEVARGGRNRAGGRVRSTEEEEATESGTEV, and GLATLPTGDDSEATETSDEAERP. Low complexity predominate over residues 222 to 231; sequence SDTAAYPAGT. Residues 243 to 277 show a composition bias toward polar residues; it reads CSQDTNFSSSRQDTPSSFGQFTPQSSQGTPYTSRG. 2 stretches are compositionally biased toward low complexity: residues 278–295 and 315–357; these read STPYSQDSAYSSSTTSTS and STSS…SSAS. A compositionally biased stretch (pro residues) spans 430 to 440; sequence SEAPPPEPPEP. A compositionally biased stretch (gly residues) spans 441 to 461; that stretch reads GGGGGGSGGGGGGGGGGGGGA. Ser-477 bears the Phosphoserine mark. The segment covering 477–487 has biased composition (low complexity); sequence SPARSGSPAPE. Residues 488-499 are compositionally biased toward polar residues; it reads TTNESVPFAQHS. Residues Ser-521 and Ser-578 each carry the phosphoserine modification. A compositionally biased stretch (polar residues) spans 581–591; that stretch reads ANGQNQASPCS. Pro residues-rich tracts occupy residues 606 to 631 and 638 to 670; these read SPPPAPTPPQQPPPPPPPPPPPPPPY and GYPPHQPAYLLPPRPDGPPPPEYPPPPPPPPPH. The span at 859 to 869 shows a compositional bias: basic and acidic residues; it reads QAKEEDKEKMK. At Ser-930 the chain carries Phosphoserine. 2 stretches are compositionally biased toward acidic residues: residues 991–1009 and 1018–1027; these read KDEDDDDEDEEDEEQEEAV and ASDGEDEDSD. Residues 1028–1071 show a composition bias toward low complexity; it reads SSSQCSLYADSDGENGSTSDSESGSSSSSSSSSSSSSSSSSSES. Ser-1110 carries the post-translational modification Phosphoserine. Positions 1130 to 1150 are enriched in pro residues; sequence EEPPPSVPQPPAEPPAGPPDA. The segment covering 1283-1292 has biased composition (acidic residues); sequence DDSEATETSD. An HCFC1-binding motif (HBM) motif is present at residues 1307 to 1311; sequence EHNYA. Disordered regions lie at residues 1355-1427 and 1480-1508; these read EEPK…FEPR and TNLSTPKRKRRPQDGPREHQTGSARSEGY. The segment covering 1369 to 1383 has biased composition (acidic residues); the sequence is EGEEEEEDEEEESES. Basic residues predominate over residues 1399-1412; the sequence is RRRSLRSHTRRRRP. The segment covering 1413–1424 has biased composition (pro residues); that stretch reads PLPPPPPPPPSF. The tract at residues 1424 to 1459 is interaction with CFP1; the sequence is FEPRSEFEQMTILYDIWNSGLDLEDMSYLRLTYERL. An interaction with ASH2L, RBBP5 and WDR5 region spans residues 1459–1546; sequence LLQQTSGADW…GTNRVLSERR (88 aa). A WDR5 interaction motif (WIN) motif is present at residues 1501-1506; it reads GSARSE. A RxxxRR motif motif is present at residues 1546–1551; that stretch reads RSEQRR. An SET domain is found at 1577–1694; sequence KKLRFGRSRI…VDEEITYDYK (118 aa). Tyr-1693 serves as a coordination point for S-adenosyl-L-methionine. Residues 1700 to 1716 enclose the Post-SET domain; sequence NKIPCLCGTESCRGSLN.

This sequence belongs to the class V-like SAM-binding methyltransferase superfamily. Component of the SET1A/COMPASS complex composed of the catalytic subunit SETD1A, WDR5, WDR82, RBBP5, ASH2L/ASH2, CXXC1/CFP1, HCFC1 and DPY30 homotrimer. Forms a core complex with the evolutionary conserved subcomplex WRAD composed of WDR5, RBBP5, ASH2L/ASH2 and DPY30 subunits; WRAD differentially stimulates the methyltransferase activity. Interacts with BOD1L1 (via COMPASS-Shg1 domain) at replication forks. Interacts with HCFC1. Interacts with ASH2/ASH2L. Interacts with CXXC1/CFP1. Interacts with RBBP5. Interacts (via N-terminal region) with WDR82; the interaction is direct. Interacts (via the RRM domain) with hyperphosphorylated C-terminal domain (CTD) of RNA polymerase II large subunit (POLR2A) only in the presence of WDR82. Binds specifically to CTD heptad repeats phosphorylated on 'Ser-5' of each heptad. Interacts with ZNF335. Interacts with SUPT6H. Interacts with NAP1L1. Interacts (via WIN motif) with WDR5.

The protein localises to the nucleus. It is found in the nucleus speckle. The protein resides in the chromosome. It localises to the cytoplasm. It catalyses the reaction L-lysyl(4)-[histone H3] + S-adenosyl-L-methionine = N(6)-methyl-L-lysyl(4)-[histone H3] + S-adenosyl-L-homocysteine + H(+). It carries out the reaction N(6)-methyl-L-lysyl(4)-[histone H3] + S-adenosyl-L-methionine = N(6),N(6)-dimethyl-L-lysyl(4)-[histone H3] + S-adenosyl-L-homocysteine + H(+). The enzyme catalyses N(6),N(6)-dimethyl-L-lysyl(4)-[histone H3] + S-adenosyl-L-methionine = N(6),N(6),N(6)-trimethyl-L-lysyl(4)-[histone H3] + S-adenosyl-L-homocysteine + H(+). Histone methyltransferase that catalyzes methyl group transfer from S-adenosyl-L-methionine to the epsilon-amino group of 'Lys-4' of histone H3 (H3K4) via a non-processive mechanism. Part of chromatin remodeling machinery, forms H3K4me1, H3K4me2 and H3K4me3 methylation marks at active chromatin sites where transcription and DNA repair take place. Responsible for H3K4me3 enriched promoters and transcriptional programming of inner mass stem cells and neuron progenitors during embryogenesis. Required for H3K4me1 mark at stalled replication forks. Mediates FANCD2-dependent nucleosome remodeling and RAD51 nucleofilaments stabilization at reversed forks, protecting them from nucleolytic degradation. Does not methylate 'Lys-4' of histone H3 if the neighboring 'Lys-9' residue is already methylated. Has RNA binding activity towards transcripts involved in RNA processing and the DNA damage response. The protein is Histone-lysine N-methyltransferase SETD1A (Setd1a) of Mus musculus (Mouse).